A 116-amino-acid polypeptide reads, in one-letter code: Nucleoid-associated protein EUBELI_02017 (116 aa).

Gly residues predominate over residues methionine 1–proline 12. Positions methionine 1–serine 42 are disordered. Over residues glycine 13 to glutamine 26 the composition is skewed to low complexity.

The protein belongs to the YbaB/EbfC family. In terms of assembly, homodimer.

It localises to the cytoplasm. The protein localises to the nucleoid. Its function is as follows. Binds to DNA and alters its conformation. May be involved in regulation of gene expression, nucleoid organization and DNA protection. The protein is Nucleoid-associated protein EUBELI_02017 of Lachnospira eligens (strain ATCC 27750 / DSM 3376 / VPI C15-48 / C15-B4) (Eubacterium eligens).